The primary structure comprises 288 residues: ATP synthase gamma chain (288 aa).

The protein belongs to the ATPase gamma chain family. As to quaternary structure, F-type ATPases have 2 components, CF(1) - the catalytic core - and CF(0) - the membrane proton channel. CF(1) has five subunits: alpha(3), beta(3), gamma(1), delta(1), epsilon(1). CF(0) has three main subunits: a, b and c.

The protein localises to the cell membrane. Produces ATP from ADP in the presence of a proton gradient across the membrane. The gamma chain is believed to be important in regulating ATPase activity and the flow of protons through the CF(0) complex. The chain is ATP synthase gamma chain from Symbiobacterium thermophilum (strain DSM 24528 / JCM 14929 / IAM 14863 / T).